The chain runs to 317 residues: MSKIAFLFPGQGSQFIGMGKELYEQVPAAKRLFDEADETLETKLSSLIFEGDAEELTLTYNAQPALLTTSIAVLEKFKESGITPDFTAGHSLGEYSALVAAGALSFKDAVYTVRKRGEFMNEAVPAGEGAMAAILGMDAEALKQVTDKVTEEGNLVQLANLNCPGQIVISGTAKGVELASELAKENGAKRAIPLEVSGPFHSELMKPAAEKLKEVLDACDIKDADVPVISNVSADVMTEKADIKEKLIEQLYSPVRFEESINKLIAEGVTTFIEIGPGKVLSGLVKKVNRRLKTIAVSDPETIELAIQTLKEENDNA.

Residues Ser-91 and His-201 contribute to the active site.

This sequence belongs to the FabD family.

It catalyses the reaction holo-[ACP] + malonyl-CoA = malonyl-[ACP] + CoA. It participates in lipid metabolism; fatty acid biosynthesis. This Bacillus subtilis (strain 168) protein is Malonyl CoA-acyl carrier protein transacylase (fabD).